The primary structure comprises 247 residues: 14-3-3 protein gamma-A (247 aa).

Belongs to the 14-3-3 family. In terms of assembly, homodimer, and heterodimer with other family members.

It is found in the cytoplasm. Adapter protein implicated in the regulation of a large spectrum of both general and specialized signaling pathways. Binds to a large number of partners, usually by recognition of a phosphoserine or phosphothreonine motif. Binding generally results in the modulation of the activity of the binding partner. The sequence is that of 14-3-3 protein gamma-A (ywhag-a) from Xenopus laevis (African clawed frog).